A 420-amino-acid polypeptide reads, in one-letter code: Chaperone protein dnaJ 3 (420 aa).

One can recognise a J domain in the interval 14–75 (KFYEILGVPK…EKREIYDQYG (62 aa)). Residues 135 to 219 (GTMKKLSLSR…CKGDKVIPEK (85 aa)) form a CR-type zinc finger. Zn(2+)-binding residues include Cys-148, Cys-151, Cys-164, Cys-167, Cys-191, Cys-194, Cys-207, and Cys-210. CXXCXGXG motif repeat units follow at residues 148-155 (CSKCNGKG), 164-171 (CGGCQGSG), 191-198 (CNECKGTG), and 207-214 (CPQCKGDK). A disordered region spans residues 376 to 420 (ETTLHDVNIEDEMRRKAQAQREAYDDDDEDDDHPGGAQRVQCAQQ). Basic and acidic residues predominate over residues 377-390 (TTLHDVNIEDEMRR). Cys-417 carries the cysteine methyl ester modification. Cys-417 carries S-farnesyl cysteine lipidation. Positions 418–420 (AQQ) are cleaved as a propeptide — removed in mature form.

It belongs to the DnaJ family. A/I subfamily. Homodimer. Zn(2+) serves as cofactor. Farnesylated. Roots, shoots, flowers, siliques and cotyledons.

The protein resides in the membrane. In terms of biological role, plays a continuous role in plant development probably in the structural organization of compartments. The protein is Chaperone protein dnaJ 3 (ATJ3) of Arabidopsis thaliana (Mouse-ear cress).